The chain runs to 945 residues: Sensor kinase CckA (945 aa).

The next 2 membrane-spanning stretches (helical) occupy residues 111–131 and 139–159; these read ALRLLIVGILLMGAAFIYFLF and FALVLMGVLSMVGVFYLFGAA. PAS domains lie at 171–212, 313–341, and 432–505; these read HQDL…TDAD, LDHAPAGFFSANPAGRIIYLNATLAEWLG, and AEVR…FAGQ. The Histidine kinase domain occupies 574–797; it reads GIAHDFNNVL…TFKIFLPRLI (224 aa). At histidine 577 the chain carries Phosphohistidine; by autocatalysis. The region spanning 825-941 is the Response regulatory domain; it reads TVLLVEDEDA…QLATTVKEML (117 aa). The residue at position 876 (aspartate 876) is a 4-aspartylphosphate.

Its subcellular location is the cell inner membrane. The enzyme catalyses ATP + protein L-histidine = ADP + protein N-phospho-L-histidine.. Component of a regulatory phosphorelay system that controls B.abortus cell growth, division, and intracellular survival inside mammalian host cells. This signaling pathway is composed of CckA, ChpT, CtrA and CpdR. CckA autophosphorylates in the presence of ATP on a conserved His residue and transfers a phosphoryl group to a conserved Asp residue on its C-terminal receiver domain. CckA-P transfers phosphoryl groups to the ChpT phosphotransferase. The protein is Sensor kinase CckA of Brucella abortus (strain 2308).